The primary structure comprises 236 residues: tRNA (guanine-N(7)-)-methyltransferase (236 aa).

The S-adenosyl-L-methionine site is built by Asp35, Glu60, Asn87, and Asp113. Residue Asp113 is part of the active site. 2 residues coordinate substrate: Lys117 and Asp149.

The protein belongs to the class I-like SAM-binding methyltransferase superfamily. TrmB family.

The enzyme catalyses guanosine(46) in tRNA + S-adenosyl-L-methionine = N(7)-methylguanosine(46) in tRNA + S-adenosyl-L-homocysteine. It participates in tRNA modification; N(7)-methylguanine-tRNA biosynthesis. In terms of biological role, catalyzes the formation of N(7)-methylguanine at position 46 (m7G46) in tRNA. This chain is tRNA (guanine-N(7)-)-methyltransferase, found in Prochlorococcus marinus (strain MIT 9313).